The sequence spans 330 residues: MLSLKLPRLFRIDQVPQVFHEQGILFGYRHPQSSATACILSLFQMTNETLNIWTHLLPFWFFVWRFMTALYVTDIQNDSYSWPMLVYMCTSCVYPLASSCAHTFSSMSKNARHICYFLDYGAVNLFSLGSAIAYSAYTFPDALVCSTFHECYVALAVLNTILSTGLSCYSRFLELQKPRLCKLLRVLAFAYPYTWDSLPIFYRLFLFPGESSRNEAMLYHQKHMGMTLLASFFYSAHLPERLAPGRFDYIGHSHQLFHVCVILATHLQMEAILLDKTLRREWLLATSRPFSFPQIAAAMLLCIIFSLSNIIYFSAALYRIPEPELHEKET.

The Cytoplasmic portion of the chain corresponds to 1–51; that stretch reads MLSLKLPRLFRIDQVPQVFHEQGILFGYRHPQSSATACILSLFQMTNETLN. A helical membrane pass occupies residues 52-72; sequence IWTHLLPFWFFVWRFMTALYV. The Extracellular segment spans residues 73 to 81; that stretch reads TDIQNDSYS. A helical membrane pass occupies residues 82–101; it reads WPMLVYMCTSCVYPLASSCA. The Cytoplasmic portion of the chain corresponds to 102 to 113; sequence HTFSSMSKNARH. Residues 114-134 traverse the membrane as a helical segment; that stretch reads ICYFLDYGAVNLFSLGSAIAY. At 135–141 the chain is on the extracellular side; that stretch reads SAYTFPD. A helical transmembrane segment spans residues 142 to 162; it reads ALVCSTFHECYVALAVLNTIL. At 163-186 the chain is on the cytoplasmic side; sequence STGLSCYSRFLELQKPRLCKLLRV. A helical transmembrane segment spans residues 187–207; it reads LAFAYPYTWDSLPIFYRLFLF. The Extracellular portion of the chain corresponds to 208-253; the sequence is PGESSRNEAMLYHQKHMGMTLLASFFYSAHLPERLAPGRFDYIGHS. Residues 254–274 traverse the membrane as a helical segment; the sequence is HQLFHVCVILATHLQMEAILL. Topologically, residues 275–294 are cytoplasmic; that stretch reads DKTLRREWLLATSRPFSFPQ. Residues 295–315 form a helical membrane-spanning segment; that stretch reads IAAAMLLCIIFSLSNIIYFSA. The Extracellular portion of the chain corresponds to 316–330; it reads ALYRIPEPELHEKET.

It belongs to the ADIPOR family.

The protein resides in the cell membrane. Plasma membrane progesterone (P4) receptor coupled to G proteins. Seems to act through a G(i) mediated pathway. May be involved in oocyte maturation. In Mus musculus (Mouse), this protein is Membrane progestin receptor gamma.